We begin with the raw amino-acid sequence, 238 residues long: Probable transcriptional regulatory protein SAK_1658 (238 aa).

The protein belongs to the TACO1 family. YeeN subfamily.

It localises to the cytoplasm. This Streptococcus agalactiae serotype Ia (strain ATCC 27591 / A909 / CDC SS700) protein is Probable transcriptional regulatory protein SAK_1658.